We begin with the raw amino-acid sequence, 289 residues long: Phosphatidylinositol:ceramide inositolphosphotransferase 3 (289 aa).

The next 5 helical transmembrane spans lie at 33–53 (LVLA…GVHY), 77–97 (AFFS…WTFH), 115–135 (VFVY…ATQL), 169–189 (VIYG…LVFV), and 199–219 (RWIK…IIAS). Residue H181 is part of the active site. Residues H222 and D226 contribute to the active site. The helical transmembrane segment at 223-243 (YTVDIVVAWYTVNLVMFYVDS) threads the bilayer. The disordered stretch occupies residues 249 to 289 (AERSSGPSPTPLLPLSTKDSKNKSKEDHQRLLNENNVADDH). Positions 266–279 (KDSKNKSKEDHQRL) are enriched in basic and acidic residues. A compositionally biased stretch (polar residues) spans 280-289 (LNENNVADDH).

The protein belongs to the sphingomyelin synthase family. As to expression, mostly expressed in stems and flowers, and, to a lower extent, in leaves, roots and siliques.

It is found in the membrane. Functionally, catalyzes the transfer of the phosphorylinositol group from phosphatidylinositol (PI) to phytoceramide, an essential step in sphingolipid biosynthesis. This chain is Phosphatidylinositol:ceramide inositolphosphotransferase 3 (IPCS3), found in Arabidopsis thaliana (Mouse-ear cress).